Here is a 272-residue protein sequence, read N- to C-terminus: 2-amino-3,7-dideoxy-D-threo-hept-6-ulosonate synthase (272 aa).

The Proton acceptor role is filled by aspartate 33. 1-deoxy-D-threo-hexo-2,5-diulose 6-phosphate contacts are provided by residues aspartate 33–serine 37 and tyrosine 153–arginine 155. Tyrosine 153 functions as the Proton donor in the catalytic mechanism. The active-site Schiff-base intermediate with substrate is the lysine 184. 1-deoxy-D-threo-hexo-2,5-diulose 6-phosphate is bound by residues glycine 209 to glycine 210 and glycine 237 to arginine 238.

The protein belongs to the DeoC/FbaB aldolase family. ADHS subfamily. In terms of assembly, homodecamer.

It catalyses the reaction 1-deoxy-D-threo-hexo-2,5-diulose 6-phosphate + L-aspartate 4-semialdehyde = 2,3-dioxopropyl phosphate + 2-amino-2,3,7-trideoxy-D-lyxo-hept-6-ulosonate. In terms of biological role, catalyzes a transaldol reaction between 6-deoxy-5-ketofructose 1-phosphate (DKFP) and L-aspartate semialdehyde (ASA) with an elimination of hydroxypyruvaldehyde phosphate to yield 2-amino-3,7-dideoxy-D-threo-hept-6-ulosonate (ADH). Plays a key role in an alternative pathway of the biosynthesis of 3-dehydroquinate (DHQ), which is involved in the canonical pathway for the biosynthesis of aromatic amino acids. In Methanococcus vannielii (strain ATCC 35089 / DSM 1224 / JCM 13029 / OCM 148 / SB), this protein is 2-amino-3,7-dideoxy-D-threo-hept-6-ulosonate synthase.